Consider the following 969-residue polypeptide: Aspartic protease 5 (969 aa).

The first 22 residues, 1–22 (MEAGAMGGSSFLSFSSGPSAET), serve as a signal peptide directing secretion. A compositionally biased stretch (low complexity) spans 1–45 (MEAGAMGGSSFLSFSSGPSAETSPSSLSPPTSSSPSPSPQLVSDS). Disordered stretches follow at residues 1–65 (MEAG…SSRT), 79–104 (ENEA…AGHL), 128–149 (SSAT…RSSS), 173–193 (SSSS…SACG), and 311–382 (FLSL…DLPR). At 23–820 (SPSSLSPPTS…PEGLPLSPQQ (798 aa)) the chain is on the lumenal side. A compositionally biased stretch (low complexity) spans 311 to 324 (FLSLSSSPRSLASD). Over residues 335-355 (QSREQRGEREGERQRPDKGEE) the composition is skewed to basic and acidic residues. The region spanning 413 to 758 (YFLDILVGTP…DREQDRVGFA (346 aa)) is the Peptidase A1 domain. Aspartate 431 is an active-site residue. Residues 608-635 (PPESESTPATEALRPVAGESASRRISEK) are disordered. Aspartate 682 is a catalytic residue. Residues 768–794 (DQRPRGPDSGDGPKGRPTAPFTVPPLR) form a disordered region. Over residues 769–781 (QRPRGPDSGDGPK) the composition is skewed to basic and acidic residues. The chain crosses the membrane as a helical span at residues 821 to 841 (LWVAAALVVVAILIAVTVILL). Topologically, residues 842–969 (HTIKRPSRSS…TLLDLPLGGE (128 aa)) are cytoplasmic. The disordered stretch occupies residues 922–969 (EDDGDFFGDDSVPSAEEQETAPSLSLREESSPFSASQSTLLDLPLGGE). Over residues 952-961 (SPFSASQSTL) the composition is skewed to polar residues.

The protein belongs to the peptidase A1 family. In terms of processing, may be auto-cleaved to produce a 55 kDa form.

The protein localises to the golgi apparatus membrane. Its function is as follows. In tachyzoites, plays an essential role in the export of several dense granule proteins into the host cell by cleaving the localization motif RRLxx (termed Toxoplasma export element (TEXEL)) located downstream of the N-terminal secretory signal sequence. However, can also regulate the export of proteins that lack the TEXEL motif, such as GRA24. Requires Arg at P3 and P2, and Leu at P1 in the substrate TEXEL motif and, specifically, cleaves after Leu. Cleaves GRA16; proteolytic cleavage is essential for the correct trafficking of GRA16 from the parasite into the infected host nucleus. Cleaves GRA19 and GRA20. Cleaves MYR1. Cleaves LCAT, GRA44, GRA46, GRA46, ROP35/WNG1 and ROP34/WNG2. By regulating the export of dense granule proteins into the host cell, regulates multiple processes during tachyzoite infection of host cells, including recruitment of host mitochondria to the parasitophorous vacuole (PV), formation of the nanotubular network (NTN) or intravacuolar network (IVN) which are membranous tubules that bud from the PV membrane into the vacuolar lumen and, up-regulation of host cell genes to facilitate the parasite infection and modulate the host innate immune response. At the bradyzoite stage, also involved in the formation of the cyst wall. In Toxoplasma gondii, this protein is Aspartic protease 5.